Reading from the N-terminus, the 194-residue chain is uncharacterized protein (194 aa).

The protein to A.rhizogenes plasmid pRia4B ORF-3 in virA region.

This is an uncharacterized protein from Sinorhizobium fredii (strain NBRC 101917 / NGR234).